Reading from the N-terminus, the 397-residue chain is Multidrug efflux pump subunit AcrA (397 aa).

The N-terminal stretch at 1–24 (MNKNRGFTPLAVVLMLSGSLALTG) is a signal peptide. The N-palmitoyl cysteine moiety is linked to residue C25. C25 carries S-diacylglycerol cysteine lipidation. Positions 98–172 (PATYQATYDS…AVETARINLA (75 aa)) form a coiled coil. The disordered stretch occupies residues 377–397 (EVTADNNQQAASGAQPEQSKS). Residues 379 to 397 (TADNNQQAASGAQPEQSKS) are compositionally biased toward polar residues.

Belongs to the membrane fusion protein (MFP) (TC 8.A.1) family. In terms of assembly, monomeric in solution. Homotrimeric; interacts independently with AcrB and TolC as well as AcrZ. Part of the AcrA-AcrB-TolC efflux pump.

Its subcellular location is the cell inner membrane. AcrA-AcrB-AcrZ-TolC is a drug efflux protein complex with broad substrate specificity that uses the proton motive force to export substrates. This subunit may act as an adapter protein that links AcrB and TolC stably together. The chain is Multidrug efflux pump subunit AcrA (acrA) from Escherichia coli O157:H7.